The following is a 181-amino-acid chain: uncharacterized protein (181 aa).

The N-terminal stretch at Met1–Thr22 is a signal peptide.

This is an uncharacterized protein from Halorubrum pleomorphic virus 1 (HRPV-1).